Consider the following 375-residue polypeptide: Erythronate-4-phosphate dehydrogenase (375 aa).

2 residues coordinate substrate: Ser-45 and Thr-66. Residues Asp-146, Thr-175, 206–208, and Asp-232 contribute to the NAD(+) site; that span reads ASR. Residue Arg-208 is part of the active site. The active site involves Glu-237. The active-site Proton donor is the His-254. Residue Gly-257 coordinates NAD(+). Tyr-258 serves as a coordination point for substrate.

Belongs to the D-isomer specific 2-hydroxyacid dehydrogenase family. PdxB subfamily. Homodimer.

The protein resides in the cytoplasm. It catalyses the reaction 4-phospho-D-erythronate + NAD(+) = (R)-3-hydroxy-2-oxo-4-phosphooxybutanoate + NADH + H(+). It functions in the pathway cofactor biosynthesis; pyridoxine 5'-phosphate biosynthesis; pyridoxine 5'-phosphate from D-erythrose 4-phosphate: step 2/5. Its function is as follows. Catalyzes the oxidation of erythronate-4-phosphate to 3-hydroxy-2-oxo-4-phosphonooxybutanoate. The chain is Erythronate-4-phosphate dehydrogenase from Proteus mirabilis (strain HI4320).